Consider the following 281-residue polypeptide: Putative outer membrane protein BBA52 (281 aa).

Residues 162 to 281 (KRISDNQSKL…FFDSLEDQFI (120 aa)) are disordered. The span at 179–196 (NKSVGSKFSKNSRPSKSP) shows a compositional bias: polar residues. A compositionally biased stretch (acidic residues) spans 219 to 249 (EFLDDPSQESDELEREYQDDELESEDPDDGE). The segment covering 250–262 (REYQDDRESRDDT) has biased composition (basic and acidic residues). Residues 263 to 281 (FNEDQSEDEFFDSLEDQFI) are compositionally biased toward acidic residues.

Its subcellular location is the cell outer membrane. The sequence is that of Putative outer membrane protein BBA52 from Borreliella burgdorferi (strain ATCC 35210 / DSM 4680 / CIP 102532 / B31) (Borrelia burgdorferi).